Reading from the N-terminus, the 498-residue chain is Histidine--tRNA ligase (498 aa).

It belongs to the class-II aminoacyl-tRNA synthetase family. In terms of assembly, homodimer.

The protein localises to the cytoplasm. It carries out the reaction tRNA(His) + L-histidine + ATP = L-histidyl-tRNA(His) + AMP + diphosphate + H(+). This Mycoplasmopsis synoviae (strain 53) (Mycoplasma synoviae) protein is Histidine--tRNA ligase.